The following is a 255-amino-acid chain: uncharacterized protein (255 aa).

This is an uncharacterized protein from Acanthamoeba polyphaga mimivirus (APMV).